We begin with the raw amino-acid sequence, 188 residues long: MNGDDAFARRPRDDAQISEKLRKAFDDIAKYFSKKEWEKMKSSEKIVYVYMKLNYEVMTKLGFKVTLPPFMRSKRAADFHGNDFGNDRNHRNQVERPQMTFGSLQRIFPKIMPKKPAEEENGLKEVPEASGPQNDGKQLCPPGNPSTLEKINKTSGPKRGKHAWTHRLRERKQLVVYEEISDPEEDDE.

The KRAB-related domain occupies K20–D83. Over residues P116–P127 the composition is skewed to basic and acidic residues. Residues P116–R167 form a disordered region. Positions P145–S155 are enriched in polar residues. A compositionally biased stretch (basic residues) spans G156 to R167.

Belongs to the SSX family.

Could act as a modulator of transcription. The sequence is that of Protein SSX4 (SSX4) from Homo sapiens (Human).